The primary structure comprises 1107 residues: Rho GTPase-activating protein 45 (1107 aa).

The disordered stretch occupies residues 1-99 (MFSRKKRELM…SPPESGEGPF (99 aa)). The segment covering 37-55 (DSSNDLASSPPSNSSPVSS) has biased composition (low complexity). Positions 56–66 (GTLKRPSSLSR) are enriched in polar residues. Coiled coils occupy residues 103-132 (EDIS…EELK) and 363-485 (NMRR…QSDQ). One can recognise an F-BAR domain in the interval 261-524 (EDVDVILQRS…SSKLYDLGQQ (264 aa)). Basic and acidic residues-rich tracts occupy residues 414–423 (NATRAEEEQS), 434–444 (RRAEEEAKNRA), and 573–588 (ENKE…ERRG). Disordered regions lie at residues 414 to 444 (NATR…KNRA) and 564 to 595 (FNSQ…HQVH). The Phorbol-ester/DAG-type zinc finger occupies 671–716 (THRLRKLRTPSKCRECNSYVYFQGAECEECSLACHKKCLETLAIQC). The Rho-GAP domain maps to 730-942 (RDFSETALRS…TLIIFYSTIF (213 aa)). The disordered stretch occupies residues 981–1036 (LTPEYQIPVFKEPGASTVESDSESDGAEDIPGTWKPQTTRGHLTKEASVTSAEDIP). Polar residues predominate over residues 1015–1031 (KPQTTRGHLTKEASVTS).

Its subcellular location is the cytoplasm. It is found in the cell projection. The protein localises to the ruffle membrane. In terms of biological role, contains a GTPase activator for the Rho-type GTPases (RhoGAP) domain that would be able to negatively regulate the actin cytoskeleton as well as cell spreading. However, also contains N-terminally a BAR-domin which is able to play an autoinhibitory effect on this RhoGAP activity. The protein is Rho GTPase-activating protein 45 of Xenopus laevis (African clawed frog).